The following is a 488-amino-acid chain: Ribulose bisphosphate carboxylase large chain (488 aa).

Residues Asn127 and Thr177 each contribute to the substrate site. Lys179 functions as the Proton acceptor in the catalytic mechanism. Position 181 (Lys181) interacts with substrate. Residues Lys205, Asp207, and Glu208 each contribute to the Mg(2+) site. Lys205 is subject to N6-carboxylysine. His297 acts as the Proton acceptor in catalysis. The substrate site is built by Arg298, His330, and Ser382.

The protein belongs to the RuBisCO large chain family. Type I subfamily. Heterohexadecamer of 8 large chains and 8 small chains. Mg(2+) serves as cofactor.

It localises to the plastid. Its subcellular location is the chloroplast. The catalysed reaction is 2 (2R)-3-phosphoglycerate + 2 H(+) = D-ribulose 1,5-bisphosphate + CO2 + H2O. It carries out the reaction D-ribulose 1,5-bisphosphate + O2 = 2-phosphoglycolate + (2R)-3-phosphoglycerate + 2 H(+). RuBisCO catalyzes two reactions: the carboxylation of D-ribulose 1,5-bisphosphate, the primary event in carbon dioxide fixation, as well as the oxidative fragmentation of the pentose substrate in the photorespiration process. Both reactions occur simultaneously and in competition at the same active site. The polypeptide is Ribulose bisphosphate carboxylase large chain (Rhodomonas salina (Cryptomonas salina)).